Reading from the N-terminus, the 239-residue chain is Metallo-beta-lactamase IND-1 (239 aa).

The signal sequence occupies residues 1–20; it reads MKKSIRFFIVSILLSPFASA. Zn(2+)-binding residues include H96, H98, D100, H159, and C178. K181 is a binding site for a beta-lactam. H220 provides a ligand contact to Zn(2+).

This sequence belongs to the metallo-beta-lactamase superfamily. Class-B beta-lactamase family. In terms of assembly, monomer. The cofactor is Zn(2+).

Its subcellular location is the periplasm. The enzyme catalyses a beta-lactam + H2O = a substituted beta-amino acid. With respect to regulation, inhibited by chelating agents such as EDTA. Not susceptible to inactivation by the beta-lactamase-blocking agent clavulanic acid. Its function is as follows. Class B beta-lactamase which confers resistance to the beta-lactam antibiotics, including penicillins, cephalosporins and carbapenems. Acts via hydrolysis of the beta-lactam ring. Has penicillin-, cephalosporin- and carbapenem-hydrolyzing activities. This is Metallo-beta-lactamase IND-1 from Chryseobacterium indologenes (Flavobacterium indologenes).